The primary structure comprises 801 residues: Interleukin-4 receptor subunit alpha (801 aa).

The signal sequence occupies residues 1-25 (MGWLCTKFLSSVSCLILLWVTGSGG). At 26 to 232 (IKVLGDPTCF…NHFQLPLLQR (207 aa)) the chain is on the extracellular side. Cys-34 and Cys-44 form a disulfide bridge. An N-linked (GlcNAc...) asparagine glycan is attached at Asn-71. Residues Cys-74 and Cys-86 are joined by a disulfide bond. The region spanning 125 to 223 (APDNLTLHTN…EWSPSITWYN (99 aa)) is the Fibronectin type-III domain. N-linked (GlcNAc...) asparagine glycans are attached at residues Asn-128, Asn-134, and Asn-162. The residue at position 164 (Ser-164) is a Phosphoserine. Asn-176 carries an N-linked (GlcNAc...) asparagine glycan. Positions 212-216 (WSEWS) match the WSXWS motif motif. Residues 233-256 (LPLGVSISCICILLFCLTCYFSII) form a helical membrane-spanning segment. Topologically, residues 257-801 (KIKKIWWDQI…PVGTLGVTVS (545 aa)) are cytoplasmic. The Box 1 motif signature appears at 262–270 (WWDQIPTPA). A disordered region spans residues 424 to 476 (VGQSSMAESSSLLPSESGQASTSWACFPTGPSETTCQVTGQQPPHPDPERATG). Residues 426–444 (QSSMAESSSLLPSESGQAS) are compositionally biased toward low complexity. A required for IRS1 activation and IL4-induced cell growth region spans residues 439–549 (ESGQASTSWA…ESWEQILHMS (111 aa)). Residues 454 to 465 (PSETTCQVTGQQ) are compositionally biased toward polar residues. Tyr-492 bears the Phosphotyrosine mark. Residues 493-515 (RSFSDFSSPAPNPGELASEQKQA) are disordered. Positions 549 to 644 (SVLQHGTAGS…NSMPLFTFGL (96 aa)) are required for IL4-induced gene expression. Phosphotyrosine occurs at positions 566, 594, and 622. The short motif at 698–703 (IVYSSL) is the ITIM motif element. Residues 767-801 (RTPSNLSGVGKGPGHSPVPSQTTEVPVGTLGVTVS) form a disordered region.

It belongs to the type I cytokine receptor family. Type 4 subfamily. As to quaternary structure, the functional IL4 receptor is formed by initial binding of IL4 to IL4R. Subsequent recruitment to the complex of the common gamma chain, in immune cells, creates a type I receptor and, in non-immune cells, of IL13RA1 forms a type II receptor. IL4R can also interact with the IL13/IL13RA1 complex to form a similar type II receptor. Interacts with PIK3C3. Interacts with the SH2-containing phosphatases, PTPN6/SHIP1, PTPN11/SHIP2 and INPP5D/SHIP. Interacts with JAK1 through a Box 1-containing region; inhibited by SOCS5. Interacts with SOCS5; inhibits IL4 signaling. Interacts with JAK3. Interacts with CLM1. Interacts with IL13RA2. Post-translationally, on IL4 binding, phosphorylated on C-terminal tyrosine residues. In terms of tissue distribution, isoform 2 is expressed in kidney, spleen, lung and liver.

The protein localises to the cell membrane. The protein resides in the secreted. In terms of biological role, receptor for both interleukin 4 and interleukin 13. Couples to the JAK1/2/3-STAT6 pathway. The IL4 response is involved in promoting Th2 differentiation. The IL4/IL13 responses are involved in regulating IgE production and, chemokine and mucus production at sites of allergic inflammation. In certain cell types, can signal through activation of insulin receptor substrates, IRS1/IRS2. Its function is as follows. Isoform 2 (soluble form) inhibits IL4-induced spleen cell proliferation. In Rattus norvegicus (Rat), this protein is Interleukin-4 receptor subunit alpha (Il4r).